The primary structure comprises 419 residues: Serine hydroxymethyltransferase (419 aa).

(6S)-5,6,7,8-tetrahydrofolate is bound by residues Leu121 and 125 to 127 (GHL). Residue Lys229 is modified to N6-(pyridoxal phosphate)lysine. 354–356 (SPF) is a (6S)-5,6,7,8-tetrahydrofolate binding site.

This sequence belongs to the SHMT family. Homodimer. Pyridoxal 5'-phosphate is required as a cofactor.

The protein resides in the cytoplasm. The enzyme catalyses (6R)-5,10-methylene-5,6,7,8-tetrahydrofolate + glycine + H2O = (6S)-5,6,7,8-tetrahydrofolate + L-serine. It participates in one-carbon metabolism; tetrahydrofolate interconversion. Its pathway is amino-acid biosynthesis; glycine biosynthesis; glycine from L-serine: step 1/1. In terms of biological role, catalyzes the reversible interconversion of serine and glycine with tetrahydrofolate (THF) serving as the one-carbon carrier. This reaction serves as the major source of one-carbon groups required for the biosynthesis of purines, thymidylate, methionine, and other important biomolecules. Also exhibits THF-independent aldolase activity toward beta-hydroxyamino acids, producing glycine and aldehydes, via a retro-aldol mechanism. The polypeptide is Serine hydroxymethyltransferase (Coxiella burnetii (strain RSA 331 / Henzerling II)).